Reading from the N-terminus, the 447-residue chain is N-succinylarginine dihydrolase (447 aa).

Substrate is bound by residues 19 to 28, Asn110, and 137 to 138; these read AGLSFGNEAS and HR. Glu174 is a catalytic residue. Residue Arg212 participates in substrate binding. His248 is a catalytic residue. Substrate is bound by residues Asp250 and Asn359. Cys365 (nucleophile) is an active-site residue.

Belongs to the succinylarginine dihydrolase family. Homodimer.

The enzyme catalyses N(2)-succinyl-L-arginine + 2 H2O + 2 H(+) = N(2)-succinyl-L-ornithine + 2 NH4(+) + CO2. Its pathway is amino-acid degradation; L-arginine degradation via AST pathway; L-glutamate and succinate from L-arginine: step 2/5. Functionally, catalyzes the hydrolysis of N(2)-succinylarginine into N(2)-succinylornithine, ammonia and CO(2). The protein is N-succinylarginine dihydrolase of Salmonella gallinarum (strain 287/91 / NCTC 13346).